The primary structure comprises 609 residues: PTS system beta-glucoside-specific EIIBCA component (609 aa).

One can recognise a PTS EIIB type-1 domain in the interval 1–86; that stretch reads MDYDKLSKDI…VRHSNLSDEK (86 aa). The Phosphocysteine intermediate; for EIIB activity role is filled by cysteine 26. The region spanning 103-459 is the PTS EIIC type-1 domain; sequence DVISGVFTPI…GSQQPAVHEG (357 aa). The next 10 membrane-spanning stretches (helical) occupy residues 112 to 132, 141 to 161, 174 to 194, 202 to 222, 246 to 266, 281 to 301, 321 to 341, 351 to 371, 379 to 399, and 412 to 432; these read ILPA…AVTF, VHVI…LLLA, VAAA…LGAG, LPVT…SIWI, FTLL…GAIL, AGLV…MTGM, LLPA…AVFL, LALT…MYGV, FAAA…TGVA, and IPVF…IAFA. The region spanning 480-584 is the PTS EIIA type-1 domain; the sequence is DGVFSAGVMG…DVITPVIVTN (105 aa). The active-site Tele-phosphohistidine intermediate; for EIIA activity is histidine 532.

The protein resides in the cell membrane. Functionally, the phosphoenolpyruvate-dependent sugar phosphotransferase system (sugar PTS), a major carbohydrate active -transport system, catalyzes the phosphorylation of incoming sugar substrates concomitantly with their translocation across the cell membrane. This system is involved in beta-glucoside transport. This chain is PTS system beta-glucoside-specific EIIBCA component (bglP), found in Bacillus subtilis (strain 168).